The sequence spans 351 residues: Anthranilate phosphoribosyltransferase (351 aa).

5-phospho-alpha-D-ribose 1-diphosphate-binding positions include G80, 83-84 (GD), T88, 90-93 (NIST), 108-116 (KHGNRSVTS), and S120. G80 lines the anthranilate pocket. S92 contacts Mg(2+). Anthranilate is bound at residue N111. R166 is an anthranilate binding site. Positions 229 and 230 each coordinate Mg(2+).

This sequence belongs to the anthranilate phosphoribosyltransferase family. As to quaternary structure, homodimer. Mg(2+) serves as cofactor.

It carries out the reaction N-(5-phospho-beta-D-ribosyl)anthranilate + diphosphate = 5-phospho-alpha-D-ribose 1-diphosphate + anthranilate. It participates in amino-acid biosynthesis; L-tryptophan biosynthesis; L-tryptophan from chorismate: step 2/5. Its function is as follows. Catalyzes the transfer of the phosphoribosyl group of 5-phosphorylribose-1-pyrophosphate (PRPP) to anthranilate to yield N-(5'-phosphoribosyl)-anthranilate (PRA). This Chlorobium chlorochromatii (strain CaD3) protein is Anthranilate phosphoribosyltransferase.